The following is a 491-amino-acid chain: Protein nucleotidyltransferase YdiU (491 aa).

8 residues coordinate ATP: Gly88, Gly90, Arg91, Lys111, Asp123, Gly124, Arg174, and Arg181. Asp250 functions as the Proton acceptor in the catalytic mechanism. Positions 251 and 260 each coordinate Mg(2+). Residue Asp260 coordinates ATP.

It belongs to the SELO family. It depends on Mg(2+) as a cofactor. Requires Mn(2+) as cofactor.

It catalyses the reaction L-seryl-[protein] + ATP = 3-O-(5'-adenylyl)-L-seryl-[protein] + diphosphate. The enzyme catalyses L-threonyl-[protein] + ATP = 3-O-(5'-adenylyl)-L-threonyl-[protein] + diphosphate. It carries out the reaction L-tyrosyl-[protein] + ATP = O-(5'-adenylyl)-L-tyrosyl-[protein] + diphosphate. The catalysed reaction is L-histidyl-[protein] + UTP = N(tele)-(5'-uridylyl)-L-histidyl-[protein] + diphosphate. It catalyses the reaction L-seryl-[protein] + UTP = O-(5'-uridylyl)-L-seryl-[protein] + diphosphate. The enzyme catalyses L-tyrosyl-[protein] + UTP = O-(5'-uridylyl)-L-tyrosyl-[protein] + diphosphate. Nucleotidyltransferase involved in the post-translational modification of proteins. It can catalyze the addition of adenosine monophosphate (AMP) or uridine monophosphate (UMP) to a protein, resulting in modifications known as AMPylation and UMPylation. This Bradyrhizobium sp. (strain BTAi1 / ATCC BAA-1182) protein is Protein nucleotidyltransferase YdiU.